Consider the following 345-residue polypeptide: Aspartate--ammonia ligase (345 aa).

Belongs to the class-II aminoacyl-tRNA synthetase family. AsnA subfamily.

It is found in the cytoplasm. The catalysed reaction is L-aspartate + NH4(+) + ATP = L-asparagine + AMP + diphosphate + H(+). It functions in the pathway amino-acid biosynthesis; L-asparagine biosynthesis; L-asparagine from L-aspartate (ammonia route): step 1/1. This Parabacteroides distasonis (strain ATCC 8503 / DSM 20701 / CIP 104284 / JCM 5825 / NCTC 11152) protein is Aspartate--ammonia ligase.